Reading from the N-terminus, the 274-residue chain is 16S rRNA (guanine(1405)-N(7))-methyltransferase (274 aa).

Residues F64, 102-104, R108, A133, D156, 182-183, L198, and Q207 each bind S-adenosyl-L-methionine; these read HVS and DL.

This sequence belongs to the methyltransferase superfamily. Aminoglycoside resistance family.

The catalysed reaction is guanosine(1405) in 16S rRNA + S-adenosyl-L-methionine = N(7)-methylguanosine(1405) in 16S rRNA + S-adenosyl-L-homocysteine. In terms of biological role, specifically methylates the N(7) position of guanine 1405 in 16S rRNA. Confers resistance to various aminoglycosides, including gentamicin and kanamycin. This Micromonospora echinospora (Micromonospora purpurea) protein is 16S rRNA (guanine(1405)-N(7))-methyltransferase (grm).